The sequence spans 582 residues: uncharacterized protein (582 aa).

Residues 20-40 (GFWALGLFGAAINAFSAVLIV) traverse the membrane as a helical segment.

It is found in the membrane. This is an uncharacterized protein from Mycoplasma pneumoniae (strain ATCC 29342 / M129 / Subtype 1) (Mycoplasmoides pneumoniae).